Here is a 101-residue protein sequence, read N- to C-terminus: Large ribosomal subunit protein uL24 (101 aa).

The protein belongs to the universal ribosomal protein uL24 family. Part of the 50S ribosomal subunit.

In terms of biological role, one of two assembly initiator proteins, it binds directly to the 5'-end of the 23S rRNA, where it nucleates assembly of the 50S subunit. Functionally, one of the proteins that surrounds the polypeptide exit tunnel on the outside of the subunit. This Borrelia hermsii (strain HS1 / DAH) protein is Large ribosomal subunit protein uL24.